The chain runs to 2415 residues: Bradyzoite-formation deficient protein 1 (2415 aa).

3 disordered regions span residues 369–392, 418–481, and 761–845; these read WNKPEAARQEYHRASASARGPEET, HLTS…PYTR, and DGCG…QDTQ. Positions 419 to 429 are enriched in basic residues; the sequence is LTSRQHPNPRP. Over residues 430-443 the composition is skewed to basic and acidic residues; that stretch reads RMKEEHCGREREVL. 2 stretches are compositionally biased toward polar residues: residues 444–460 and 832–843; these read SSEQPSDCGETQKTPAS and PRTTSSSSYGQD. Residues 921–968 enclose the Myb-like domain; that stretch reads WSAEEDASLAELVSRKGFKWALISSQLTGAFGIPRTGKQCRERWFNHV. Residues 969 to 1023 form the HTH myb-type domain; sequence NPEVKKGDWSAEEDAMILMLQNELGNRWATIAKKLRGRTENAVKNRFISLSNARL. The segment at residues 996–1019 is a DNA-binding region (H-T-H motif); it reads WATIAKKLRGRTENAVKNRFISLS. Disordered stretches follow at residues 1027–1050, 1098–1127, 1206–1270, 1319–1343, 1501–1521, 1905–1932, 1959–2013, and 2161–2222; these read RPKRDGSSADCFSNRRTGSGKSSG, VSRPRQCTGTSPSCGHPSAGEGDPSHLKNT, NDER…NGLD, PACDHRGAPQNSVESGEQSPDAQRQ, QLWTSQETESDTNPSPNQQHE, VSRDKQREPPKNGLTGCDVPEYLGTSQS, RVRW…GSTA, and GTDA…EMQD. The segment covering 1036–1050 has biased composition (polar residues); the sequence is DCFSNRRTGSGKSSG. Positions 1227 to 1237 are enriched in basic and acidic residues; sequence AHEHADIARSD. 2 stretches are compositionally biased toward polar residues: residues 1327 to 1343 and 1501 to 1520; these read PQNSVESGEQSPDAQRQ and QLWTSQETESDTNPSPNQQH. Residues 1974 to 1985 show a composition bias toward polar residues; it reads SVSSGASNSATT. Positions 2181–2197 are enriched in basic and acidic residues; it reads QAHRRDGHDMQRVQRCD.

It localises to the nucleus. Functionally, master transcription factor that controls the differentiation of acute-stage tachyzoite parasites into chronic-stage bradyzoites, which form intracellular cysts resistant to immune clearance and existing therapies. Sufficient to drive differentiation into bradyzoite stage. Following translation in response to stress conditions, binds to the promoter of many chronic stage-specific genes and promotes their expression, thereby driving differentiation into bradyzoites. This Toxoplasma gondii (strain ATCC 50611 / Me49) protein is Bradyzoite-formation deficient protein 1.